A 914-amino-acid chain; its full sequence is Beta-mannosidase A (914 aa).

Positions 1-20 are cleaved as a signal peptide; it reads MRFTATAAALVASSIPATLG. 7 N-linked (GlcNAc...) asparagine glycosylation sites follow: asparagine 39, asparagine 79, asparagine 230, asparagine 265, asparagine 299, asparagine 309, and asparagine 330. Residue glutamate 462 is the Proton donor of the active site. Asparagine 591, asparagine 614, asparagine 641, asparagine 721, asparagine 744, asparagine 773, asparagine 784, and asparagine 909 each carry an N-linked (GlcNAc...) asparagine glycan.

It belongs to the glycosyl hydrolase 2 family. Beta-mannosidase A subfamily. In terms of assembly, homodimer.

It localises to the secreted. The catalysed reaction is Hydrolysis of terminal, non-reducing beta-D-mannose residues in beta-D-mannosides.. Its pathway is glycan metabolism; N-glycan degradation. Its function is as follows. Exoglycosidase that cleaves the single beta-linked mannose residue from the non-reducing end of beta-mannosidic oligosaccharides of various complexity and length. Involved in the degradation of polymeric mannan and galactomannan. This chain is Beta-mannosidase A (mndA), found in Aspergillus oryzae (strain ATCC 42149 / RIB 40) (Yellow koji mold).